A 1463-amino-acid chain; its full sequence is Nitric oxide synthase 1 (1463 aa).

The segment at 1-200 (MESHMFSVQQ…LQGSGENNKL (200 aa)) is interaction with NOSIP. In terms of domain architecture, PDZ spans 17–99 (SVRLFKRKVG…ETHVVLILRG (83 aa)). 3 disordered regions span residues 110–194 (TFTG…LQGS), 215–250 (GKAINGGGPAKTETKDVEVQVDRDPDSKSHKPLPLG), and 268–298 (VVLNNPYSEKEQPSASGKQSPTKNGSPSKCP). A DYNLL1/PIN/nNOS-inhibiting protein-binding region spans residues 158–240 (PDPGQEASSL…VEVQVDRDPD (83 aa)). Residues 226–243 (TETKDVEVQVDRDPDSKS) show a composition bias toward basic and acidic residues. Positions 280 to 294 (PSASGKQSPTKNGSP) are enriched in polar residues. Ser-334 is a binding site for (6R)-L-erythro-5,6,7,8-tetrahydrobiopterin. Cys-415 serves as a coordination point for heme b. The L-arginine site is built by Gln-478, Trp-587, Tyr-588, and Glu-592. (6R)-L-erythro-5,6,7,8-tetrahydrobiopterin-binding residues include Val-677, Trp-678, and Phe-691. Residue Tyr-706 participates in heme b binding. The segment at 725 to 745 (KRRAIGFKKLAEAVKFSAKLM) is calmodulin-binding. One can recognise a Flavodoxin-like domain in the interval 755 to 969 (ATILYATETG…AFRTWAKKVF (215 aa)). 8 residues coordinate FMN: Thr-761, Glu-762, Thr-763, Lys-765, Ser-766, Ser-807, Thr-808, and Gly-812. A phosphoserine mark is found at Ser-881, Ser-891, and Ser-892. FMN-binding residues include Ser-920, His-925, Cys-927, Glu-953, and Gln-957. One can recognise an FAD-binding FR-type domain in the interval 1024–1271 (KRVSAARLLS…VRGAPSFHLP (248 aa)). An NADP(+)-binding site is contributed by Arg-1044. The FAD site is built by His-1066, Arg-1207, Tyr-1208, Tyr-1209, Ser-1210, Thr-1225, and Ala-1227. NADP(+) is bound at residue Ser-1230. FAD contacts are provided by Tyr-1231, Val-1244, Cys-1245, and Ser-1246. The NADP(+) site is built by Thr-1285, Arg-1318, Ser-1347, Arg-1348, Lys-1354, Tyr-1356, Gln-1358, Asp-1391, Thr-1432, and Arg-1434.

It belongs to the NOS family. As to quaternary structure, homodimer. Interacts with DLG4; the interaction possibly being prevented by the association between NOS1 and CAPON. Forms a ternary complex with CAPON and RASD1. Forms a ternary complex with CAPON and SYN1. Interacts with ZDHHC23. Interacts with NOSIP; which may impair its synaptic location. Interacts with HTR4. Interacts with SLC6A4. Interacts with VAC14. Interacts (via N-terminal domain) with DLG4 (via N-terminal tandem pair of PDZ domains). Interacts with SLC6A4. Forms a complex with ASL, ASS1 and SLC7A1; the complex regulates cell-autonomous L-arginine synthesis and citrulline recycling while channeling extracellular L-arginine to nitric oxide synthesis pathway. Interacts with DMD; localizes NOS1 to sarcolemma in muscle cells. Interacts with DYNLL1; inhibits the nitric oxide synthase activity. Heme b is required as a cofactor. It depends on FAD as a cofactor. Requires FMN as cofactor. (6R)-L-erythro-5,6,7,8-tetrahydrobiopterin serves as cofactor. Post-translationally, ubiquitinated; mediated by STUB1/CHIP in the presence of Hsp70 and Hsp40 (in vitro).

The protein localises to the cell membrane. It localises to the sarcolemma. The protein resides in the cell projection. Its subcellular location is the dendritic spine. The catalysed reaction is 2 L-arginine + 3 NADPH + 4 O2 + H(+) = 2 L-citrulline + 2 nitric oxide + 3 NADP(+) + 4 H2O. Stimulated by calcium/calmodulin. Inhibited by DYNLL1 that prevents the dimerization of the protein. Inhibited by NOSIP. Produces nitric oxide (NO) which is a messenger molecule with diverse functions throughout the body. In the brain and peripheral nervous system, NO displays many properties of a neurotransmitter. Probably has nitrosylase activity and mediates cysteine S-nitrosylation of cytoplasmic target proteins such SRR. This Ovis aries (Sheep) protein is Nitric oxide synthase 1 (NOS1).